A 489-amino-acid polypeptide reads, in one-letter code: Serotonin-gated chloride channel mod-1 (489 aa).

Residues 1-20 (MKFIPEITLLLLLFVHSTQA) form the signal peptide. Over 21–240 (KGKRRKCPEG…VTFTFKRRYG (220 aa)) the chain is Extracellular. Residues Asn44, Asn103, and Asn144 are each glycosylated (N-linked (GlcNAc...) asparagine). The serotonin site is built by Tyr180 and Trp226. A run of 3 helical transmembrane segments spans residues 241-261 (FYII…WVSF), 274-294 (VGIS…KNLP), and 304-324 (VWML…AFVC). The Cytoplasmic segment spans residues 325–458 (YISRCQNSVR…ARFHPEAVDK (134 aa)). The segment at 365 to 398 (GSVISHYHPTSNGNGNNNRHDTPQVTGRGSLHRN) is disordered. The span at 372–391 (HPTSNGNGNNNRHDTPQVTG) shows a compositional bias: polar residues. The helical transmembrane segment at 459-479 (FSIVAFPLAFTMFNLVYWWHY) threads the bilayer.

The protein belongs to the ligand-gated ion channel (TC 1.A.9) family. Expressed in a subset of muscles, and head and tail neurons, including RME and GABAergic ventral nerve cord neurons. Expressed in AIY, RME, RID, RIF, ASI, DD1-6, and PVN neurons.

It is found in the membrane. It localises to the cell membrane. In terms of biological role, functions as a 5-hydroxytryptamine (serotonin) receptor. This receptor is a ligand-gated anion-specific ion channel, selective for chloride ions. Relays a long-range endocrine signal from the body cavity neurons to modulate distal adipose triglyceride lipase atgl-1 function, via the nuclear receptor nhr-76. Together with the G-protein coupled serotonin receptor ser-1 involved in male mating behavior. May mediate an inhibitory effect of serotonin on egg laying. Involved in regulating locomotory behavior, perhaps by modulating interneuronal signaling, acting in concert with G-protein coupled serotonin receptor ser-4. In the presence of food, plays a role in initiating and extending dwelling behavior, perhaps acting in AIY, RIF and ASI neurons, in opposition to neuropeptide PDF-mediated signaling. Plays a role in aversive learning upon exposure to pathogens such as Gram-negative bacterium P.aeruginosa strain PA14; perhaps acting in interneurons in response to serotonin released by the serotonergic ADF neurons. This chain is Serotonin-gated chloride channel mod-1, found in Caenorhabditis elegans.